A 199-amino-acid polypeptide reads, in one-letter code: 5'-deoxynucleotidase YfbR (199 aa).

Residues 18 to 19 and His-33 each bind substrate; that span reads RW. One can recognise an HD domain in the interval 30-142; it reads VSEHSLQVAM…VKQADALCAY (113 aa). A divalent metal cation-binding residues include His-33, His-68, and Asp-69. Residues Asp-69, 77–80, and Asp-137 each bind substrate; that span reads DLPT. Asp-137 provides a ligand contact to a divalent metal cation.

The protein belongs to the 5DNU family. In terms of assembly, homodimer. Requires a divalent metal cation as cofactor.

The protein localises to the cytoplasm. It catalyses the reaction a 2'-deoxyribonucleoside 5'-phosphate + H2O = a 2'-deoxyribonucleoside + phosphate. Catalyzes the strictly specific dephosphorylation of 2'-deoxyribonucleoside 5'-monophosphates. The polypeptide is 5'-deoxynucleotidase YfbR (Salmonella arizonae (strain ATCC BAA-731 / CDC346-86 / RSK2980)).